A 567-amino-acid chain; its full sequence is Formate--tetrahydrofolate ligase (567 aa).

68–75 (TPLGEGKT) contributes to the ATP binding site.

This sequence belongs to the formate--tetrahydrofolate ligase family.

The enzyme catalyses (6S)-5,6,7,8-tetrahydrofolate + formate + ATP = (6R)-10-formyltetrahydrofolate + ADP + phosphate. It functions in the pathway one-carbon metabolism; tetrahydrofolate interconversion. The sequence is that of Formate--tetrahydrofolate ligase from Desulforamulus reducens (strain ATCC BAA-1160 / DSM 100696 / MI-1) (Desulfotomaculum reducens).